The chain runs to 253 residues: Triosephosphate isomerase (253 aa).

8-10 (NWK) contacts substrate. H93 functions as the Electrophile in the catalytic mechanism. E165 acts as the Proton acceptor in catalysis. Residues G171, S210, and 231 to 232 (GG) each bind substrate.

This sequence belongs to the triosephosphate isomerase family. Homodimer.

Its subcellular location is the cytoplasm. The catalysed reaction is D-glyceraldehyde 3-phosphate = dihydroxyacetone phosphate. Its pathway is carbohydrate biosynthesis; gluconeogenesis. It participates in carbohydrate degradation; glycolysis; D-glyceraldehyde 3-phosphate from glycerone phosphate: step 1/1. In terms of biological role, involved in the gluconeogenesis. Catalyzes stereospecifically the conversion of dihydroxyacetone phosphate (DHAP) to D-glyceraldehyde-3-phosphate (G3P). This is Triosephosphate isomerase from Francisella tularensis subsp. holarctica (strain FTNF002-00 / FTA).